The chain runs to 233 residues: Orotidine 5'-phosphate decarboxylase (233 aa).

Substrate is bound by residues D9, K31, 58–67 (DLKLHDIPNT), T120, R182, Q191, G211, and R212. The Proton donor role is filled by K60.

Belongs to the OMP decarboxylase family. Type 1 subfamily. In terms of assembly, homodimer.

It carries out the reaction orotidine 5'-phosphate + H(+) = UMP + CO2. Its pathway is pyrimidine metabolism; UMP biosynthesis via de novo pathway; UMP from orotate: step 2/2. Functionally, catalyzes the decarboxylation of orotidine 5'-monophosphate (OMP) to uridine 5'-monophosphate (UMP). The polypeptide is Orotidine 5'-phosphate decarboxylase (Listeria monocytogenes serovar 1/2a (strain ATCC BAA-679 / EGD-e)).